A 71-amino-acid chain; its full sequence is Small ribosomal subunit protein bS21 (71 aa).

This sequence belongs to the bacterial ribosomal protein bS21 family.

The sequence is that of Small ribosomal subunit protein bS21 from Chromohalobacter salexigens (strain ATCC BAA-138 / DSM 3043 / CIP 106854 / NCIMB 13768 / 1H11).